Consider the following 314-residue polypeptide: GMP synthase [glutamine-hydrolyzing] subunit B (314 aa).

Residues 2–186 (FDPKKFVEEA…LGIPDEIVER (185 aa)) form the GMPS ATP-PPase domain. 29-35 (SGGVDST) lines the ATP pocket.

In terms of assembly, heterodimer composed of a glutamine amidotransferase subunit (A) and a GMP-binding subunit (B).

It carries out the reaction XMP + L-glutamine + ATP + H2O = GMP + L-glutamate + AMP + diphosphate + 2 H(+). It participates in purine metabolism; GMP biosynthesis; GMP from XMP (L-Gln route): step 1/1. Its function is as follows. Catalyzes the synthesis of GMP from XMP. This Methanopyrus kandleri (strain AV19 / DSM 6324 / JCM 9639 / NBRC 100938) protein is GMP synthase [glutamine-hydrolyzing] subunit B (guaAB).